A 485-amino-acid polypeptide reads, in one-letter code: Glutamyl-tRNA(Gln) amidotransferase subunit A (485 aa).

Residues K76 and S155 each act as charge relay system in the active site. S179 (acyl-ester intermediate) is an active-site residue.

This sequence belongs to the amidase family. GatA subfamily. In terms of assembly, heterotrimer of A, B and C subunits.

It catalyses the reaction L-glutamyl-tRNA(Gln) + L-glutamine + ATP + H2O = L-glutaminyl-tRNA(Gln) + L-glutamate + ADP + phosphate + H(+). Functionally, allows the formation of correctly charged Gln-tRNA(Gln) through the transamidation of misacylated Glu-tRNA(Gln) in organisms which lack glutaminyl-tRNA synthetase. The reaction takes place in the presence of glutamine and ATP through an activated gamma-phospho-Glu-tRNA(Gln). This is Glutamyl-tRNA(Gln) amidotransferase subunit A from Marinobacter nauticus (strain ATCC 700491 / DSM 11845 / VT8) (Marinobacter aquaeolei).